We begin with the raw amino-acid sequence, 342 residues long: Dihydroorotase (342 aa).

Zn(2+) is bound by residues histidine 13 and histidine 15. Substrate contacts are provided by residues 15–17 and asparagine 41; that span reads HLR. Zn(2+)-binding residues include lysine 98, histidine 135, and histidine 173. N6-carboxylysine is present on lysine 98. Substrate is bound at residue histidine 135. Leucine 218 is a substrate binding site. A Zn(2+)-binding site is contributed by aspartate 246. Aspartate 246 is an active-site residue. Substrate contacts are provided by histidine 250 and alanine 262.

The protein belongs to the metallo-dependent hydrolases superfamily. DHOase family. Class II DHOase subfamily. In terms of assembly, homodimer. Zn(2+) serves as cofactor.

It catalyses the reaction (S)-dihydroorotate + H2O = N-carbamoyl-L-aspartate + H(+). It participates in pyrimidine metabolism; UMP biosynthesis via de novo pathway; (S)-dihydroorotate from bicarbonate: step 3/3. Catalyzes the reversible cyclization of carbamoyl aspartate to dihydroorotate. This chain is Dihydroorotase, found in Vibrio vulnificus (strain CMCP6).